The sequence spans 200 residues: Cation channel sperm-associated auxiliary subunit zeta (200 aa).

Residues methionine 1–aspartate 29 show a composition bias toward basic and acidic residues. Disordered regions lie at residues methionine 1–tryptophan 31 and asparagine 58–lysine 78.

In terms of assembly, component of the CatSper complex or CatSpermasome composed of the core pore-forming members CATSPER1, CATSPER2, CATSPER3 and CATSPER4 as well as auxiliary members CATSPERB, CATSPERG, CATSPERD, CATSPERE, CATSPERZ, C2CD6/CATSPERT, TMEM249, TMEM262 and EFCAB9. HSPA1 may be an additional auxiliary complex member. The core complex members CATSPER1, CATSPER2, CATSPER3 and CATSPER4 form a heterotetrameric channel. The auxiliary CATSPERB, CATSPERG, CATSPERD and CATSPERE subunits form a pavilion-like structure over the pore which stabilizes the complex through interactions with CATSPER4, CATSPER3, CATSPER1 and CATSPER2 respectively. TMEM262/CATSPERH interacts with CATSPERB, further stabilizing the complex. C2CD6/CATSPERT interacts at least with CATSPERD and is required for targeting the CatSper complex in the flagellar membrane. Interacts with EFCAB9; the interaction is direct, Ca(2+)-dependent and connects EFCAB9 with the CatSper complex. Dissociates from EFCAB9 at elevated pH.

It is found in the cell projection. It localises to the cilium. The protein localises to the flagellum membrane. In terms of biological role, auxiliary component of the CatSper complex, a complex involved in sperm cell hyperactivation. Sperm cell hyperactivation is needed for sperm motility which is essential late in the preparation of sperm for fertilization. Required for a distribution of the CatSper complex in linear quadrilateral nanodomains along the flagellum, maximizing fertilization inside the mammalian female reproductive tract. Together with EFCAB9, associates with the CatSper channel pore and is required for the two-row structure of each single CatSper channel. The polypeptide is Cation channel sperm-associated auxiliary subunit zeta (Homo sapiens (Human)).